The chain runs to 309 residues: uncharacterized protein (309 aa).

Positions 1–16 (MAGNSRRRGAVRKAGT) are enriched in basic residues. Positions 1 to 70 (MAGNSRRRGA…AKRTEETETV (70 aa)) are disordered. Positions 261, 281, and 290 each coordinate S-adenosyl-L-methionine.

The protein belongs to the class IV-like SAM-binding methyltransferase superfamily. RNA methyltransferase TrmH family.

This is an uncharacterized protein from Mycolicibacterium paratuberculosis (strain ATCC BAA-968 / K-10) (Mycobacterium paratuberculosis).